Here is a 61-residue protein sequence, read N- to C-terminus: Cobrotoxin-b (61 aa).

4 disulfides stabilise this stretch: C3/C23, C17/C40, C42/C53, and C54/C59.

It belongs to the three-finger toxin family. Short-chain subfamily. Type I alpha-neurotoxin sub-subfamily. As to expression, expressed by the venom gland.

The protein resides in the secreted. In terms of biological role, produces peripheral paralysis by blocking neuromuscular transmission at the postsynaptic site. Binds to the nicotinic acetylcholine receptor. This Naja kaouthia (Monocled cobra) protein is Cobrotoxin-b.